Reading from the N-terminus, the 297-residue chain is NAD kinase (297 aa).

Asp-74 acts as the Proton acceptor in catalysis. Residues 74 to 75 (DG), Arg-79, 148 to 149 (NE), Arg-176, Asp-178, 189 to 194 (TAYALS), and Gln-248 contribute to the NAD(+) site.

It belongs to the NAD kinase family. It depends on a divalent metal cation as a cofactor.

The protein localises to the cytoplasm. It carries out the reaction NAD(+) + ATP = ADP + NADP(+) + H(+). Involved in the regulation of the intracellular balance of NAD and NADP, and is a key enzyme in the biosynthesis of NADP. Catalyzes specifically the phosphorylation on 2'-hydroxyl of the adenosine moiety of NAD to yield NADP. The polypeptide is NAD kinase (Blochmanniella pennsylvanica (strain BPEN)).